We begin with the raw amino-acid sequence, 160 residues long: Large ribosomal subunit protein eL21B (160 aa).

The disordered stretch occupies residues 114–140; it reads AKRKEAKAQGKTVQLRRQPAPPATAHF.

This sequence belongs to the eukaryotic ribosomal protein eL21 family. As to quaternary structure, component of the large ribosomal subunit (LSU). Mature yeast ribosomes consist of a small (40S) and a large (60S) subunit. The 40S small subunit contains 1 molecule of ribosomal RNA (18S rRNA) and at least 33 different proteins. The large 60S subunit contains 3 rRNA molecules (25S, 5.8S and 5S rRNA) and at least 46 different proteins.

It is found in the cytoplasm. Its function is as follows. Component of the ribosome, a large ribonucleoprotein complex responsible for the synthesis of proteins in the cell. The small ribosomal subunit (SSU) binds messenger RNAs (mRNAs) and translates the encoded message by selecting cognate aminoacyl-transfer RNA (tRNA) molecules. The large subunit (LSU) contains the ribosomal catalytic site termed the peptidyl transferase center (PTC), which catalyzes the formation of peptide bonds, thereby polymerizing the amino acids delivered by tRNAs into a polypeptide chain. The nascent polypeptides leave the ribosome through a tunnel in the LSU and interact with protein factors that function in enzymatic processing, targeting, and the membrane insertion of nascent chains at the exit of the ribosomal tunnel. In Schizosaccharomyces pombe (strain 972 / ATCC 24843) (Fission yeast), this protein is Large ribosomal subunit protein eL21B (rpl2102).